Here is a 1072-residue protein sequence, read N- to C-terminus: Carbamoyl phosphate synthase large chain (1072 aa).

The interval 1–401 (MPKRLDINTI…SLLKAVRSLE (401 aa)) is carboxyphosphate synthetic domain. Residues Arg-129, Arg-169, Gly-175, Gly-176, Lys-208, Ile-210, Glu-215, Gly-241, Val-242, His-243, Gln-284, and Glu-298 each contribute to the ATP site. The ATP-grasp 1 domain occupies 133 to 327 (RTLMQELNEP…IAKLAAKIAV (195 aa)). 3 residues coordinate Mg(2+): Gln-284, Glu-298, and Asn-300. Gln-284, Glu-298, and Asn-300 together coordinate Mn(2+). The oligomerization domain stretch occupies residues 402–546 (LGIYHLELDH…YSTYADENES (145 aa)). Residues 547–929 (IVTDRKSVVV…ALYKGLVASG (383 aa)) are carbamoyl phosphate synthetic domain. Residues 671-861 (EAALTKLGIP…MANVATKVIL (191 aa)) enclose the ATP-grasp 2 domain. ATP is bound by residues Arg-707, Arg-746, Glu-752, Gly-777, Val-778, His-779, Ser-780, Gln-820, and Glu-832. Mg(2+) contacts are provided by Gln-820, Glu-832, and Asn-834. Positions 820, 832, and 834 each coordinate Mn(2+). The 143-residue stretch at 930–1072 (INIPTHGSVI…QTKRHEVVHA (143 aa)) folds into the MGS-like domain. The allosteric domain stretch occupies residues 930–1072 (INIPTHGSVI…QTKRHEVVHA (143 aa)).

The protein belongs to the CarB family. In terms of assembly, composed of two chains; the small (or glutamine) chain promotes the hydrolysis of glutamine to ammonia, which is used by the large (or ammonia) chain to synthesize carbamoyl phosphate. Tetramer of heterodimers (alpha,beta)4. Mg(2+) serves as cofactor. Requires Mn(2+) as cofactor.

It catalyses the reaction hydrogencarbonate + L-glutamine + 2 ATP + H2O = carbamoyl phosphate + L-glutamate + 2 ADP + phosphate + 2 H(+). The catalysed reaction is hydrogencarbonate + NH4(+) + 2 ATP = carbamoyl phosphate + 2 ADP + phosphate + 2 H(+). It participates in amino-acid biosynthesis; L-arginine biosynthesis; carbamoyl phosphate from bicarbonate: step 1/1. It functions in the pathway pyrimidine metabolism; UMP biosynthesis via de novo pathway; (S)-dihydroorotate from bicarbonate: step 1/3. Functionally, large subunit of the glutamine-dependent carbamoyl phosphate synthetase (CPSase). CPSase catalyzes the formation of carbamoyl phosphate from the ammonia moiety of glutamine, carbonate, and phosphate donated by ATP, constituting the first step of 2 biosynthetic pathways, one leading to arginine and/or urea and the other to pyrimidine nucleotides. The large subunit (synthetase) binds the substrates ammonia (free or transferred from glutamine from the small subunit), hydrogencarbonate and ATP and carries out an ATP-coupled ligase reaction, activating hydrogencarbonate by forming carboxy phosphate which reacts with ammonia to form carbamoyl phosphate. This chain is Carbamoyl phosphate synthase large chain, found in Bacillus thuringiensis (strain Al Hakam).